Here is an 847-residue protein sequence, read N- to C-terminus: UPF0182 protein CYB_0372 (847 aa).

7 helical membrane-spanning segments follow: residues 7 to 27, 51 to 71, 76 to 96, 141 to 161, 168 to 188, 220 to 240, and 259 to 279; these read GLFL…LAAF, WGLG…NICS, ATLA…AGSL, FNLV…ELGL, LALS…LFLI, LPAT…FWAL, and WASS…FGLL.

It belongs to the UPF0182 family.

It localises to the cell membrane. This Synechococcus sp. (strain JA-2-3B'a(2-13)) (Cyanobacteria bacterium Yellowstone B-Prime) protein is UPF0182 protein CYB_0372.